The chain runs to 349 residues: Histidinol-phosphate aminotransferase (349 aa).

At lysine 206 the chain carries N6-(pyridoxal phosphate)lysine.

Belongs to the class-II pyridoxal-phosphate-dependent aminotransferase family. Histidinol-phosphate aminotransferase subfamily. Homodimer. Requires pyridoxal 5'-phosphate as cofactor.

It carries out the reaction L-histidinol phosphate + 2-oxoglutarate = 3-(imidazol-4-yl)-2-oxopropyl phosphate + L-glutamate. Its pathway is amino-acid biosynthesis; L-histidine biosynthesis; L-histidine from 5-phospho-alpha-D-ribose 1-diphosphate: step 7/9. The protein is Histidinol-phosphate aminotransferase of Hydrogenobaculum sp. (strain Y04AAS1).